Here is a 71-residue protein sequence, read N- to C-terminus: uncharacterized protein (71 aa).

This is an uncharacterized protein from Homo sapiens (Human).